Here is a 131-residue protein sequence, read N- to C-terminus: Small ribosomal subunit protein uS8 (131 aa).

Belongs to the universal ribosomal protein uS8 family. As to quaternary structure, part of the 30S ribosomal subunit. Contacts proteins S5 and S12.

Functionally, one of the primary rRNA binding proteins, it binds directly to 16S rRNA central domain where it helps coordinate assembly of the platform of the 30S subunit. This is Small ribosomal subunit protein uS8 from Laribacter hongkongensis (strain HLHK9).